The sequence spans 66 residues: Large ribosomal subunit protein bL31 (66 aa).

Positions 16, 18, 36, and 39 each coordinate Zn(2+).

The protein belongs to the bacterial ribosomal protein bL31 family. Type A subfamily. In terms of assembly, part of the 50S ribosomal subunit. Zn(2+) is required as a cofactor.

Its function is as follows. Binds the 23S rRNA. This Moorella thermoacetica (strain ATCC 39073 / JCM 9320) protein is Large ribosomal subunit protein bL31.